The following is a 150-amino-acid chain: Ribonuclease H (150 aa).

In terms of domain architecture, RNase H type-1 spans 1–141 (MKSIEVHTDG…VDVLARNQAT (141 aa)). Mg(2+) contacts are provided by Asp-9, Glu-47, Asp-69, and Asp-133.

The protein belongs to the RNase H family. As to quaternary structure, monomer. It depends on Mg(2+) as a cofactor.

The protein resides in the cytoplasm. The enzyme catalyses Endonucleolytic cleavage to 5'-phosphomonoester.. Endonuclease that specifically degrades the RNA of RNA-DNA hybrids. This chain is Ribonuclease H, found in Xanthomonas oryzae pv. oryzae (strain MAFF 311018).